The chain runs to 39 residues: Large ribosomal subunit protein bL36 (39 aa).

The protein belongs to the bacterial ribosomal protein bL36 family.

The polypeptide is Large ribosomal subunit protein bL36 (Oenococcus oeni (strain ATCC BAA-331 / PSU-1)).